A 284-amino-acid polypeptide reads, in one-letter code: F-box protein PP2-B5 (284 aa).

Residues 32–80 (ASFDDLPDDCLAIISSFTSTPRDAFLAALVSKSFGLQFNSDSVWEKFLP) form the F-box domain.

The polypeptide is F-box protein PP2-B5 (PP2B5) (Arabidopsis thaliana (Mouse-ear cress)).